The following is a 699-amino-acid chain: Epithelial sodium channel subunit alpha (699 aa).

Residues 1 to 71 (MLDHTRAPEL…EPRQPTEEEE (71 aa)) are disordered. The Cytoplasmic portion of the chain corresponds to 1 to 110 (MLDHTRAPEL…CSKHNRMKTA (110 aa)). The chain crosses the membrane as a helical span at residues 111–131 (FWAVLWLCTFGMMYWQFALLF). Residues 132-589 (EEYFSYPVSL…SQWSLWFGSS (458 aa)) are Extracellular-facing. Cystine bridges form between Cys158/Cys332, Cys256/Cys263, Cys309/Cys316, Cys421/Cys506, Cys443/Cys483, Cys443/Cys502, Cys447/Cys498, Cys456/Cys483, Cys456/Cys506, and Cys458/Cys472. Residues 200–270 (RRRSTRDLRG…SDCFYQTYSS (71 aa)) are gating release of inhibition by proteolysis (GRIP); protease-sensitive region that is responsible for the proteolytic activation of the channel. Positions 211–244 (LPHPLQRLRTPPPPNPARSARSASSSVRDNNPQV) are disordered. A compositionally biased stretch (low complexity) spans 227–238 (ARSARSASSSVR). A helical membrane pass occupies residues 590–610 (VLSVVEMAELIFDLLVITLIM). The Cytoplasmic segment spans residues 611 to 699 (LLHRFRSRYW…SSACAPAMAL (89 aa)). The interval 637 to 699 (ASSFPSRFCP…SSACAPAMAL (63 aa)) is disordered. The span at 656–667 (PQQGTTPPLALT) shows a compositional bias: low complexity. The short motif at 669–673 (PPPAY) is the PY motif; recruits WW domain-containing proteins and is thereby required for ubiquitination and inhibition of the channel by NEDD4 and NEDD4L element.

Belongs to the amiloride-sensitive sodium channel (TC 1.A.6) family. SCNN1A subfamily. In terms of assembly, heterotrimer; containing an alpha/SCNN1A, a beta/SCNN1B and a gamma/SCNN1G subunit. Interacts with WWP1 (via WW domains). Interacts with WWP2 (via WW domains); inhibits the channel. Interacts with BPIFA1; the interaction is indirect via SCNN1B and inhibits the proteolytic processing of SCNN1A and SCNN1G and the activation of ENaC. Interacts with the full-length immature form of PCSK9 (pro-PCSK9). In terms of processing, ubiquitinated. Can be ubiquitinated at multiple sites and undergo monoubiquitination and polyubiquitination. Ubiquitination by NEDD4 or NEDD4L inhibits the ENaC channel through endocytosis, intracellular retention and degradation of its individual subunits. ENaC is activated through the proteolytic maturation of its subunits. Furin cleaves the SCNN1A subunit, which results in a stepwise increase in the open probability of the channel due to the release of an inhibitory tract. BPIFA1, which is recruited by the SCNN1B subunit, prevents the proteolytic activation of ENaC. Post-translationally, N-glycosylated. In terms of tissue distribution, expressed in kidney (at protein level). Expressed in lung (at protein level). Expressed in the epididymis (at protein level). In the caput and corpus regions of the epididymis, expressed uniformly on the luminal and basal surfaces of the ducts and in the sperm in the duct lumen. Also expressed in distal colon and, at low levels, in liver.

Its subcellular location is the apical cell membrane. It localises to the cell projection. The protein resides in the cilium. The protein localises to the cytoplasmic granule. It is found in the cytoplasm. Its subcellular location is the cytoplasmic vesicle. It localises to the secretory vesicle. The protein resides in the acrosome. The protein localises to the flagellum. It catalyses the reaction Na(+)(in) = Na(+)(out). Its activity is regulated as follows. Originally identified and characterized by its inhibition by the diuretic drug amiloride. Functionally, this is one of the three pore-forming subunits of the heterotrimeric epithelial sodium channel (ENaC), a critical regulator of sodium balance and fluid homeostasis. ENaC operates in epithelial tissues, where it mediates the electrodiffusion of sodium ions from extracellular fluid through the apical membrane of cells, with water following osmotically. It plays a key role in maintaining sodium homeostasis through electrogenic sodium reabsorption in the kidneys. Additionally, ENaC is essential for airway surface liquid homeostasis, which is crucial for proper mucus clearance. This Mus musculus (Mouse) protein is Epithelial sodium channel subunit alpha.